Here is a 178-residue protein sequence, read N- to C-terminus: Inorganic pyrophosphatase (178 aa).

3 residues coordinate substrate: lysine 30, arginine 44, and tyrosine 56. Residues aspartate 66, aspartate 71, and aspartate 103 each contribute to the Mg(2+) site. Tyrosine 142 serves as a coordination point for substrate.

Belongs to the PPase family. In terms of assembly, homohexamer. Mg(2+) is required as a cofactor.

The protein resides in the cytoplasm. The enzyme catalyses diphosphate + H2O = 2 phosphate + H(+). Functionally, catalyzes the hydrolysis of inorganic pyrophosphate (PPi) forming two phosphate ions. The polypeptide is Inorganic pyrophosphatase (Xylella fastidiosa (strain 9a5c)).